The sequence spans 447 residues: Putative branched-chain amino acid carrier protein SSP1343 (447 aa).

A run of 12 helical transmembrane segments spans residues 6–26 (WIIG…IFPP), 40–60 (ILAF…VGAL), 74–94 (PKFS…LFAI), 116–136 (LALF…CINP), 143–163 (IGSL…VKGF), 192–212 (GYLT…VNAV), 228–248 (LMAG…LGYI), 289–309 (LLGI…VVAV), 324–344 (IYVI…LNSV), 349–369 (VPVL…ILLA), 381–401 (IPVA…QGWI), and 416–436 (LEWF…AAMV).

The protein belongs to the branched chain amino acid transporter family.

It localises to the cell membrane. Its function is as follows. Component of the transport system for branched-chain amino acids (leucine, isoleucine and valine), which is coupled to a proton motive force. In Staphylococcus saprophyticus subsp. saprophyticus (strain ATCC 15305 / DSM 20229 / NCIMB 8711 / NCTC 7292 / S-41), this protein is Putative branched-chain amino acid carrier protein SSP1343.